Consider the following 251-residue polypeptide: Phosphate import ATP-binding protein PstB (251 aa).

An ABC transporter domain is found at 5–246 (FDIRNFSVYY…PEKELTEKYL (242 aa)). 37-44 (GPSGCGKS) serves as a coordination point for ATP.

It belongs to the ABC transporter superfamily. Phosphate importer (TC 3.A.1.7) family. In terms of assembly, the complex is composed of two ATP-binding proteins (PstB), two transmembrane proteins (PstC and PstA) and a solute-binding protein (PstS).

It is found in the cell membrane. It carries out the reaction phosphate(out) + ATP + H2O = ADP + 2 phosphate(in) + H(+). Its function is as follows. Part of the ABC transporter complex PstSACB involved in phosphate import. Responsible for energy coupling to the transport system. The protein is Phosphate import ATP-binding protein PstB of Archaeoglobus fulgidus (strain ATCC 49558 / DSM 4304 / JCM 9628 / NBRC 100126 / VC-16).